A 390-amino-acid polypeptide reads, in one-letter code: Protein-glutamate methylesterase/protein-glutamine glutaminase 1 (390 aa).

Residues 4 to 121 form the Response regulatory domain; it reads KVLVVDDSGF…SRNPQKVKQL (118 aa). At aspartate 55 the chain carries 4-aspartylphosphate. Low complexity predominate over residues 132-186; the sequence is SNRRSSGIGSASAASPAPAAPAPSTLSSRAPAPSAAAPARAVPSRTVAPAAAPAA. The tract at residues 132–201 is disordered; it reads SNRRSSGIGS…PAHPTTTGTA (70 aa). The region spanning 195–387 is the CheB-type methylesterase domain; it reads PTTTGTAKRK…LDDIGRHLVE (193 aa). Residues serine 214, histidine 241, and aspartate 334 contribute to the active site.

Belongs to the CheB family. In terms of processing, phosphorylated by CheA. Phosphorylation of the N-terminal regulatory domain activates the methylesterase activity.

The protein localises to the cytoplasm. It catalyses the reaction [protein]-L-glutamate 5-O-methyl ester + H2O = L-glutamyl-[protein] + methanol + H(+). The enzyme catalyses L-glutaminyl-[protein] + H2O = L-glutamyl-[protein] + NH4(+). Involved in chemotaxis. Part of a chemotaxis signal transduction system that modulates chemotaxis in response to various stimuli. Catalyzes the demethylation of specific methylglutamate residues introduced into the chemoreceptors (methyl-accepting chemotaxis proteins or MCP) by CheR. Also mediates the irreversible deamidation of specific glutamine residues to glutamic acid. The sequence is that of Protein-glutamate methylesterase/protein-glutamine glutaminase 1 from Pseudomonas syringae pv. tomato (strain ATCC BAA-871 / DC3000).